A 1088-amino-acid polypeptide reads, in one-letter code: RNA-directed RNA polymerase (1088 aa).

A RdRp catalytic domain is found at 501–687; the sequence is LSYGDVTRFL…AKRYIAGGKI (187 aa).

This sequence belongs to the reoviridae RNA-directed RNA polymerase family. In terms of assembly, interacts with VP3 (Potential). Interacts with VP2; this interaction activates VP1. Interacts with NSP5; this interaction is probably necessary for the formation of functional virus factories. Interacts with NSP2; this interaction is weak. Requires Mg(2+) as cofactor.

It localises to the virion. It carries out the reaction RNA(n) + a ribonucleoside 5'-triphosphate = RNA(n+1) + diphosphate. Functionally, RNA-directed RNA polymerase that is involved in both transcription and genome replication. Together with VP3 capping enzyme, forms an enzyme complex positioned near the channels situated at each of the five-fold vertices of the core. Following infection, the outermost layer of the virus is lost, leaving a double-layered particle (DLP) made up of the core and VP6 shell. VP1 then catalyzes the transcription of fully conservative plus-strand genomic RNAs that are extruded through the DLP's channels into the cytoplasm where they function as mRNAs for translation of viral proteins. One copy of each of the viral (+)RNAs is also recruited during core assembly, together with newly synthesized polymerase complexes and VP2. The polymerase of these novo-formed particles catalyzes the synthesis of complementary minus-strands leading to dsRNA formation. To do so, the polymerase specifically recognizes and binds 4 bases 5'-UGUG-3' in the conserved 3'-sequence of plus-strand RNA templates. VP2 presumably activates the autoinhibited VP1-RNA complex to coordinate packaging and genome replication. Once dsRNA synthesis is complete, the polymerase switches to the transcriptional mode, thus providing secondary transcription. This Homo sapiens (Human) protein is RNA-directed RNA polymerase.